The chain runs to 83 residues: Small ribosomal subunit protein eS21 (83 aa).

Belongs to the eukaryotic ribosomal protein eS21 family. Component of the 40S small ribosomal subunit.

The protein resides in the cytoplasm. The protein localises to the cytosol. It localises to the rough endoplasmic reticulum. The sequence is that of Small ribosomal subunit protein eS21 (RpS21) from Biphyllus lunatus (Beetle).